Here is a 230-residue protein sequence, read N- to C-terminus: Putative N-acetylmannosamine-6-phosphate 2-epimerase (230 aa).

It belongs to the NanE family.

The enzyme catalyses an N-acyl-D-glucosamine 6-phosphate = an N-acyl-D-mannosamine 6-phosphate. Its pathway is amino-sugar metabolism; N-acetylneuraminate degradation; D-fructose 6-phosphate from N-acetylneuraminate: step 3/5. Functionally, converts N-acetylmannosamine-6-phosphate (ManNAc-6-P) to N-acetylglucosamine-6-phosphate (GlcNAc-6-P). In Malacoplasma penetrans (strain HF-2) (Mycoplasma penetrans), this protein is Putative N-acetylmannosamine-6-phosphate 2-epimerase.